A 339-amino-acid chain; its full sequence is Fructose-1,6-bisphosphatase class 1 (339 aa).

Residues E92, D114, L116, and D117 each contribute to the Mg(2+) site. Substrate is bound by residues 117–120 (DGSS), N209, and K275. A Mg(2+)-binding site is contributed by E281.

Belongs to the FBPase class 1 family. As to quaternary structure, homotetramer. It depends on Mg(2+) as a cofactor.

The protein resides in the cytoplasm. The catalysed reaction is beta-D-fructose 1,6-bisphosphate + H2O = beta-D-fructose 6-phosphate + phosphate. Its pathway is carbohydrate biosynthesis; gluconeogenesis. This chain is Fructose-1,6-bisphosphatase class 1, found in Acidithiobacillus ferrooxidans (strain ATCC 53993 / BNL-5-31) (Leptospirillum ferrooxidans (ATCC 53993)).